The sequence spans 500 residues: DNA polymerase processivity factor (500 aa).

The segment at 388 to 500 is disordered; it reads VSESDDAAAE…QEPANKRGKR (113 aa). Positions 438-449 are enriched in polar residues; it reads TLQQSAQPSSPA.

Belongs to the herpesviridae DNA polymerase processivity factor family. Interacts with the DNA polymerase catalytic subunit UL30. Interacts with the origin-binding protein.

The protein resides in the host nucleus. Its function is as follows. Plays an essential role in viral DNA replication by acting as the polymerase accessory subunit. Associates with the viral polymerase to increase its processivity and forms high-affinity direct interactions with DNA. Facilitates the origin-binding protein UL9 loading onto DNA thus increasing its ability to assemble into a functional complex capable of unwinding duplex DNA. The sequence is that of DNA polymerase processivity factor (UL42) from Amazona oratrix (yellow-headed parrot).